Reading from the N-terminus, the 402-residue chain is CMP-sialic acid transporter 3 (402 aa).

At 1–42 (MSGEVECRVCHAKVQVPMAAAAVSKAYDIHRSSVSSRQRALN) the chain is on the cytoplasmic side. The chain crosses the membrane as a helical span at residues 43–63 (VLLVSGDCVLAGLQPILVYMC). Residues 64–73 (KVDGKFKFSP) are Lumenal-facing. A helical transmembrane segment spans residues 74–94 (VSVNFLTEITKIIFAIIMLCI). Over 95-118 (QARRLKVGEKPFLTVSTFMQAARN) the chain is Cytoplasmic. Residues 119-139 (NVLLAVPALFYAINNYMKFVM) form a helical membrane-spanning segment. Over 140–146 (QLYFNPA) the chain is Lumenal. The chain crosses the membrane as a helical span at residues 147–167 (TVKMLGNLKVLVIAVLLKVIM). Over 168-170 (RRR) the chain is Cytoplasmic. The helical transmembrane segment at 171-191 (FSTIQWEALALLLIGISVNQL) threads the bilayer. Residues 192 to 202 (KSLPEGSSTLG) lie on the Lumenal side of the membrane. The helical transmembrane segment at 203 to 223 (LPVAAGAYLYTLFFVTVPALA) threads the bilayer. Topologically, residues 224–243 (SVYNEKALKSQFDTSIYLQN) are cytoplasmic. Residues 244 to 264 (LFLYGYGAIFNFLGLVITAII) traverse the membrane as a helical segment. Topologically, residues 265-280 (QGPSSFNILEGHSKAT) are lumenal. Residues 281–301 (MFLICNNAAQGILSSFFFKYA) form a helical membrane-spanning segment. At 302–321 (DTILKKYSSTIATIFTGVAS) the chain is on the cytoplasmic side. A helical membrane pass occupies residues 322–342 (AVLFGHTLTINFVLAISIVII). The Lumenal portion of the chain corresponds to 343–402 (SMHQYLSNQIKDEVPSSKIEMGDAHEHRSKESVVVNVSDSIATEAKHRHGTDERQPLLPV).

The protein belongs to the nucleotide-sugar transporter family. CMP-Sialate:CMP antiporter (TC 2.A.7.12) subfamily.

It localises to the golgi apparatus membrane. In terms of biological role, sugar transporter involved in the transport of CMP-sialic acid from the cytoplasm into the Golgi. May transport important nucleotide sugars such as CMP-Kdo (2-keto-3-deoxy-D-manno-octulosonic acid) in physiological conditions. This chain is CMP-sialic acid transporter 3, found in Oryza sativa subsp. indica (Rice).